The following is a 571-amino-acid chain: Phosphoenolpyruvate-protein phosphotransferase (571 aa).

Catalysis depends on H203, which acts as the Tele-phosphohistidine intermediate. Positions 306 and 342 each coordinate phosphoenolpyruvate. Mg(2+) is bound by residues E429 and D453. Phosphoenolpyruvate contacts are provided by residues 452–453 and R463; that span reads ND. The active-site Proton donor is the C500.

The protein belongs to the PEP-utilizing enzyme family. In terms of assembly, homodimer. Mg(2+) is required as a cofactor.

The protein localises to the cytoplasm. It carries out the reaction L-histidyl-[protein] + phosphoenolpyruvate = N(pros)-phospho-L-histidyl-[protein] + pyruvate. In terms of biological role, general (non sugar-specific) component of the phosphoenolpyruvate-dependent sugar phosphotransferase system (sugar PTS). This major carbohydrate active-transport system catalyzes the phosphorylation of incoming sugar substrates concomitantly with their translocation across the cell membrane. Enzyme I transfers the phosphoryl group from phosphoenolpyruvate (PEP) to the phosphoryl carrier protein (HPr). The chain is Phosphoenolpyruvate-protein phosphotransferase (ptsI) from Chlamydia pneumoniae (Chlamydophila pneumoniae).